Consider the following 407-residue polypeptide: Tryptophan synthase beta chain (407 aa).

Lys91 is modified (N6-(pyridoxal phosphate)lysine).

The protein belongs to the TrpB family. In terms of assembly, tetramer of two alpha and two beta chains. Requires pyridoxal 5'-phosphate as cofactor.

It catalyses the reaction (1S,2R)-1-C-(indol-3-yl)glycerol 3-phosphate + L-serine = D-glyceraldehyde 3-phosphate + L-tryptophan + H2O. It functions in the pathway amino-acid biosynthesis; L-tryptophan biosynthesis; L-tryptophan from chorismate: step 5/5. Functionally, the beta subunit is responsible for the synthesis of L-tryptophan from indole and L-serine. The chain is Tryptophan synthase beta chain from Streptococcus pneumoniae (strain P1031).